The primary structure comprises 400 residues: Acetate kinase (400 aa).

Residue asparagine 10 coordinates Mg(2+). Residue lysine 17 participates in ATP binding. Arginine 91 contributes to the substrate binding site. Catalysis depends on aspartate 150, which acts as the Proton donor/acceptor. ATP-binding positions include 210–214, 285–287, and 333–337; these read HLGNG, DCR, and GIGEN. Glutamate 387 contacts Mg(2+).

The protein belongs to the acetokinase family. In terms of assembly, homodimer. The cofactor is Mg(2+). It depends on Mn(2+) as a cofactor.

The protein resides in the cytoplasm. It catalyses the reaction acetate + ATP = acetyl phosphate + ADP. It functions in the pathway metabolic intermediate biosynthesis; acetyl-CoA biosynthesis; acetyl-CoA from acetate: step 1/2. Functionally, catalyzes the formation of acetyl phosphate from acetate and ATP. Can also catalyze the reverse reaction. This is Acetate kinase from Escherichia coli O157:H7.